The chain runs to 87 residues: Acyl-CoA-binding protein (87 aa).

An N-acetylserine modification is found at S2. Positions 2 to 87 constitute an ACB domain; the sequence is SQAEFDKAAE…VEELKKKYGI (86 aa). K8 carries the N6-acetyllysine; alternate modification. The residue at position 8 (K8) is an N6-succinyllysine; alternate. K14 is a binding site for an acyl-CoA. K17 is subject to N6-succinyllysine. K19 is modified (N6-acetyllysine). Phosphotyrosine is present on Y29. An acyl-CoA-binding positions include 29–33, K51, K55, and Y74; that span reads YSHYK. Position 51 is an N6-acetyllysine (K51). The residue at position 55 (K55) is an N6-acetyllysine; alternate. K55 bears the N6-succinyllysine; alternate mark. K55 carries the N6-(2-hydroxyisobutyryl)lysine; alternate modification. Position 55 is an N6-malonyllysine; alternate (K55). K77 carries the N6-acetyllysine; alternate modification. K77 is modified (N6-succinyllysine; alternate).

This sequence belongs to the ACBP family. As to quaternary structure, monomer.

Its subcellular location is the endoplasmic reticulum. It localises to the golgi apparatus. Functionally, binds medium- and long-chain acyl-CoA esters with very high affinity and may function as an intracellular carrier of acyl-CoA esters. It is also able to displace diazepam from the benzodiazepine (BZD) recognition site located on the GABA type A receptor. It is therefore possible that this protein also acts as a neuropeptide to modulate the action of the GABA receptor. The protein is Acyl-CoA-binding protein (DBI) of Bos taurus (Bovine).